The following is a 666-amino-acid chain: Neopullulanase 1 (666 aa).

Positions 1–29 are cleaved as a signal peptide; sequence MIKLLKPMSLSILLVFILSFSFPFPTAKA. Alanine 31, aspartate 33, asparagine 35, aspartate 71, aspartate 125, asparagine 174, aspartate 176, asparagine 179, aspartate 180, glycine 216, and aspartate 218 together coordinate Ca(2+). Residue histidine 296 coordinates substrate. Ca(2+)-binding residues include aspartate 305, asparagine 309, phenylalanine 310, serine 312, and glutamate 317. Arginine 383 is a binding site for substrate. The active-site Nucleophile is the aspartate 385. Catalysis depends on glutamate 425, which acts as the Proton donor. Substrate is bound by residues 500-501, aspartate 545, and arginine 549; that span reads HD.

The protein belongs to the glycosyl hydrolase 13 family. Ca(2+) is required as a cofactor.

It is found in the secreted. It carries out the reaction Hydrolysis of pullulan to panose (6-alpha-D-glucosylmaltose).. Its function is as follows. Endohydrolysis of 1,4-alpha-glucosidic linkages in pullulan to form panose. Also hydrolyzes cyclodextrins. This chain is Neopullulanase 1 (tvaI), found in Thermoactinomyces vulgaris.